Reading from the N-terminus, the 487-residue chain is UDP-N-acetylmuramate--L-alanine ligase (487 aa).

Residue glycine 122–serine 128 participates in ATP binding.

Belongs to the MurCDEF family.

It is found in the cytoplasm. It carries out the reaction UDP-N-acetyl-alpha-D-muramate + L-alanine + ATP = UDP-N-acetyl-alpha-D-muramoyl-L-alanine + ADP + phosphate + H(+). It participates in cell wall biogenesis; peptidoglycan biosynthesis. In terms of biological role, cell wall formation. The protein is UDP-N-acetylmuramate--L-alanine ligase of Corynebacterium urealyticum (strain ATCC 43042 / DSM 7109).